Consider the following 146-residue polypeptide: uncharacterized protein (146 aa).

Residues Met-1 to Glu-137 form the HTH marR-type domain.

This is an uncharacterized protein from Staphylococcus aureus (strain MRSA252).